The primary structure comprises 373 residues: MEVMQVLHMNKGNGETSYAKNSTVQSKIISVGKPIIEEAVHEISCNNLLESMGIADLGCSSGPNTLSVISEIMDMVQTTSRRLGRPVPEFRVYLNDLYSNDFNYIFMSLPAFYHRLKEEKGIGCGSCYISGVAGSFYGRLFPSKSLHFVHSSSSLHWLSQVPPGLESKALAPLNKGKVYISKSSPQSVLNAYSLQFQNDFSMFIESRSQELVPGGRMVLSFMGRRSTDPTTEESCHHWELLAQAIMSLVREGLIEEAKVDSFNAPYYAPCAEEIKVEIQKVGSFVIDRLEGFEIDWDGGAVSDVQTAQGKLLIGQRVAKTIRAVVESMLESHFGIGQDIMDDLFSRYAEIVGNHLSKTRTKYINLVISLIKKG.

Y18 provides a ligand contact to S-adenosyl-L-homocysteine. Q25 provides a ligand contact to jasmonate. Residues C59, N64, D96, L97, S135, and F136 each coordinate S-adenosyl-L-homocysteine. The jasmonate site is built by H156 and W157. 4 residues coordinate Mg(2+): N174, D260, F262, and N263.

It belongs to the methyltransferase superfamily. Type-7 methyltransferase family. Mg(2+) serves as cofactor.

The protein localises to the cytoplasm. Its subcellular location is the nucleus. The enzyme catalyses jasmonate + S-adenosyl-L-methionine = methyl (-)-jasmonate + S-adenosyl-L-homocysteine. It participates in lipid metabolism; oxylipin biosynthesis. Catalyzes the methylation of jasmonate into methyljasmonate, a plant volatile that acts as an important cellular regulator mediating diverse developmental processes and defense responses. This Theobroma cacao (Cacao) protein is Probable jasmonic acid carboxyl methyltransferase 2.